We begin with the raw amino-acid sequence, 379 residues long: UDP-4-amino-4-deoxy-L-arabinose--oxoglutarate aminotransferase (379 aa).

Lysine 182 carries the post-translational modification N6-(pyridoxal phosphate)lysine.

It belongs to the DegT/DnrJ/EryC1 family. ArnB subfamily. In terms of assembly, homodimer. The cofactor is pyridoxal 5'-phosphate.

The catalysed reaction is UDP-4-amino-4-deoxy-beta-L-arabinose + 2-oxoglutarate = UDP-beta-L-threo-pentopyranos-4-ulose + L-glutamate. The protein operates within nucleotide-sugar biosynthesis; UDP-4-deoxy-4-formamido-beta-L-arabinose biosynthesis; UDP-4-deoxy-4-formamido-beta-L-arabinose from UDP-alpha-D-glucuronate: step 2/3. It participates in bacterial outer membrane biogenesis; lipopolysaccharide biosynthesis. Its function is as follows. Catalyzes the conversion of UDP-4-keto-arabinose (UDP-Ara4O) to UDP-4-amino-4-deoxy-L-arabinose (UDP-L-Ara4N). The modified arabinose is attached to lipid A and is required for resistance to polymyxin and cationic antimicrobial peptides. The protein is UDP-4-amino-4-deoxy-L-arabinose--oxoglutarate aminotransferase of Escherichia coli O127:H6 (strain E2348/69 / EPEC).